The chain runs to 290 residues: tRNA (adenine(58)-N(1))-methyltransferase catalytic subunit TRMT61A (290 aa).

The residue at position 2 (serine 2) is an N-acetylserine. Substrate stretches follow at residues 20 to 22, 35 to 42, 64 to 65, 85 to 89, and 110 to 117; these read LGH, QTQTRHGV, GW, QILYS, and SGTGSGSV. Residues leucine 87, 114–116, glutamate 135, arginine 140, 163–164, and aspartate 181 contribute to the S-adenosyl-L-methionine site; these read SGS and DV. Substrate regions lie at residues 180–183 and 205–212; these read LDIP and SFSPCIEQ. A substrate-binding site is contributed by threonine 279.

This sequence belongs to the class I-like SAM-binding methyltransferase superfamily. TRM61 family. In terms of assembly, heterotetramer; composed of two copies of TRMT6 and two copies of TRMT61A.

It is found in the nucleus. It catalyses the reaction adenosine(58) in tRNA + S-adenosyl-L-methionine = N(1)-methyladenosine(58) in tRNA + S-adenosyl-L-homocysteine + H(+). The catalysed reaction is an adenosine in mRNA + S-adenosyl-L-methionine = an N(1)-methyladenosine in mRNA + S-adenosyl-L-homocysteine + H(+). Its function is as follows. Catalytic subunit of tRNA (adenine-N(1)-)-methyltransferase, which catalyzes the formation of N(1)-methyladenine at position 58 (m1A58) in initiator methionyl-tRNA. Catalytic subunit of mRNA N(1)-methyltransferase complex, which mediates methylation of adenosine residues at the N(1) position of a small subset of mRNAs: N(1) methylation takes place in tRNA T-loop-like structures of mRNAs and is only present at low stoichiometries. The chain is tRNA (adenine(58)-N(1))-methyltransferase catalytic subunit TRMT61A (Trmt61a) from Rattus norvegicus (Rat).